A 601-amino-acid chain; its full sequence is Ubiquitin carboxyl-terminal hydrolase MINDY-2 (601 aa).

The segment at 1–205 is disordered; sequence MENSPDSPQP…LCKEEEEDPA (205 aa). Residues 24 to 34 are compositionally biased toward basic and acidic residues; it reads EGRRRGGREAE. Threonine 62 is modified (phosphothreonine). At serine 82 the chain carries Phosphoserine. Composition is skewed to low complexity over residues 127-141, 148-169, and 186-195; these read EEPS…SCSE, SPSL…SSEF, and GAAGPPRAAP. Cysteine 244 (nucleophile) is an active-site residue. Histidine 426 serves as the catalytic Proton acceptor. The interval 485 to 537 is ubiquitin-binding domain (UBD); it reads GQQDQIDQDYLMALSLQQEQQSQEINWEQIPEGISDLELAKKLQEEEDRRASQ. The disordered stretch occupies residues 534–601; it reads RASQYYQEQE…EKEKNSCVIL (68 aa). Residues 536–570 show a composition bias toward low complexity; the sequence is SQYYQEQEQAQAVVTTTTPSTQAQQGQPAQASPSS. The segment covering 577-601 has biased composition (basic and acidic residues); that stretch reads SERKRKEPREKDKEKEKEKNSCVIL.

The protein belongs to the MINDY deubiquitinase family. FAM63 subfamily.

It catalyses the reaction Thiol-dependent hydrolysis of ester, thioester, amide, peptide and isopeptide bonds formed by the C-terminal Gly of ubiquitin (a 76-residue protein attached to proteins as an intracellular targeting signal).. Functionally, hydrolase that can remove 'Lys-48'-linked conjugated ubiquitin from proteins. Can also bind to polyubiquitin chains of different linkage types, including 'Lys-6', 'Lys-11', 'Lys-29', 'Lys-33' and 'Lys-63'. May play a regulatory role at the level of protein turnover. The sequence is that of Ubiquitin carboxyl-terminal hydrolase MINDY-2 (Mindy2) from Mus musculus (Mouse).